The chain runs to 406 residues: Kelch domain-containing protein 2 (406 aa).

Kelch repeat units lie at residues 31–85 (ERSG…NTEG), 92–136 (SGSC…ERID), 148–207 (LGVW…TWSQ), 221–259 (HACATVGNRGFVFGGRYRDARMNDLHYLNLDTWEWNELI), 271–311 (HSLT…IQFN), and 322–359 (HTACASDEGEVIVFGGCANNLLVHHRAAHSNEILIFSV).

In terms of assembly, component of a CRL2(KLHDC2) E3 ubiquitin-protein ligase complex, also named ECS(KLHDC2) complex, composed of CUL2, Elongin BC (ELOB and ELOC), RBX1 and substrate-specific adapter KLHDC2. May form oligomers as a KLHDC2-ELOB-ELOC complex; this interaction is autoinhibitory for the E3 ligase complex as the substrate-binding site of KLHDC2 is blocked in the oligomer. Interacts with CREB3; interaction is direct and specific as it does not interact with CREB1, ATF4, ATF6, JUN, FOS, CEBPA or herpes simplex virus transactivator VP16. Autoubiquitinated by the CRL2(KLHDC2) E3 ligase complex. As to expression, widely expressed, with high levels in skeletal muscle, heart, pancreas and liver. Undetectable in peripheral blood leukocytes.

Its subcellular location is the nucleus. It functions in the pathway protein modification; protein ubiquitination. Substrate-recognition component of a Cul2-RING (CRL2) E3 ubiquitin-protein ligase complex of the DesCEND (destruction via C-end degrons) pathway, which recognizes a C-degron located at the extreme C terminus of target proteins, leading to their ubiquitination and degradation. The C-degron recognized by the DesCEND pathway is usually a motif of less than ten residues and can be present in full-length proteins, truncated proteins or proteolytically cleaved forms. The CRL2(KLHDC2) complex specifically recognizes proteins with a diglycine (Gly-Gly) at the C-terminus, leading to their ubiquitination and degradation. The CRL2(KLHDC2) complex mediates ubiquitination and degradation of truncated SELENOK and SELENOS selenoproteins produced by failed UGA/Sec decoding, which end with a diglycine. The CRL2(KLHDC2) complex also recognizes proteolytically cleaved proteins ending with Gly-Gly, such as the N-terminal fragment of USP1, leading to their degradation. May also act as an indirect repressor of CREB3-mediated transcription by interfering with CREB3-DNA-binding. This is Kelch domain-containing protein 2 from Homo sapiens (Human).